A 331-amino-acid polypeptide reads, in one-letter code: Histone-lysine N-methyltransferase, H3 lysine-9 specific dim-5 (331 aa).

One can recognise a Pre-SET domain in the interval 77–159; it reads VGCSCASDEE…DCPNRVVERG (83 aa). Zn(2+) contacts are provided by Cys79, Cys81, Cys87, Cys92, Cys94, Cys141, Cys145, Cys147, and Cys151. One can recognise an SET domain in the interval 162–297; it reads VPLQIFRTKD…KGTELTFDYV (136 aa). S-adenosyl-L-methionine contacts are provided by residues 172–174, Asp215, Tyr217, Arg251, and 254–255; these read RGW and NH. The Zn(2+) site is built by Cys257, Cys319, Cys321, and Cys326. Positions 315–331 constitute a Post-SET domain; sequence EMTKCLCGTAKCRGYLW.

This sequence belongs to the class V-like SAM-binding methyltransferase superfamily. Histone-lysine methyltransferase family. Suvar3-9 subfamily.

The protein resides in the nucleus. It is found in the chromosome. The catalysed reaction is L-lysyl(9)-[histone H3] + 3 S-adenosyl-L-methionine = N(6),N(6),N(6)-trimethyl-L-lysyl(9)-[histone H3] + 3 S-adenosyl-L-homocysteine + 3 H(+). Histone methyltransferase that specifically trimethylates histone H3 to form H3K9me3. H3K9me3 marks chromatin regions for DNA methylation. Dim-5 recognizes Arg-8 to Gly-12 of the H3 tail with Thr-11 and Gly-12 being the most important specificity determinants, the recognition of whcih is important to distinguish H3K9 from H3K27 and H4K20. This chain is Histone-lysine N-methyltransferase, H3 lysine-9 specific dim-5 (dim-5), found in Neurospora crassa (strain ATCC 24698 / 74-OR23-1A / CBS 708.71 / DSM 1257 / FGSC 987).